The sequence spans 336 residues: Dihydroorotate dehydrogenase (quinone) (336 aa).

Residues 62–66 (AGLDK) and threonine 86 contribute to the FMN site. Position 66 (lysine 66) interacts with substrate. 111 to 115 (NRMGF) contributes to the substrate binding site. The FMN site is built by asparagine 139 and asparagine 172. Asparagine 172 contributes to the substrate binding site. Serine 175 functions as the Nucleophile in the catalytic mechanism. A substrate-binding site is contributed by asparagine 177. Lysine 217 and threonine 245 together coordinate FMN. 246 to 247 (NT) provides a ligand contact to substrate. FMN-binding positions include glycine 268, glycine 297, and 318-319 (YS).

It belongs to the dihydroorotate dehydrogenase family. Type 2 subfamily. As to quaternary structure, monomer. FMN is required as a cofactor.

Its subcellular location is the cell membrane. The catalysed reaction is (S)-dihydroorotate + a quinone = orotate + a quinol. Its pathway is pyrimidine metabolism; UMP biosynthesis via de novo pathway; orotate from (S)-dihydroorotate (quinone route): step 1/1. Functionally, catalyzes the conversion of dihydroorotate to orotate with quinone as electron acceptor. This chain is Dihydroorotate dehydrogenase (quinone), found in Vibrio vulnificus (strain CMCP6).